Consider the following 105-residue polypeptide: Chloroacetanilide N-alkylformylase 1, ferredoxin component (105 aa).

The 104-residue stretch at Pro2–Asp105 folds into the 2Fe-2S ferredoxin-type domain. Positions 40, 46, 49, and 86 each coordinate [2Fe-2S] cluster.

This sequence belongs to the adrenodoxin/putidaredoxin family. In terms of assembly, the chloroacetanilide N-alkylformylase multicomponent enzyme system is composed of an oxygenase component (CndA) and an electron transfer component formed by a ferredoxin reductase (CndC1) and a ferredoxin (CndB1). In vitro, chloroacetanilide N-alkylformylase assays in which CndB1 is substituted for CndB2 demonstrate that the two enzymes possess nearly identical activities. [2Fe-2S] cluster is required as a cofactor.

Its function is as follows. Component of the chloroacetanilide N-alkylformylase multicomponent enzyme system involved in the degradation of chloroacetanilide herbicides (N-alkoxyalkyl-N-chloroacetyl-substituted aniline derivatives). In vitro, functions as an intermediate electron transfer protein. The protein is Chloroacetanilide N-alkylformylase 1, ferredoxin component of Rhizorhabdus wittichii (strain DC-6 / KACC 16600) (Sphingomonas wittichii).